We begin with the raw amino-acid sequence, 367 residues long: Putrescine-binding periplasmic protein SpuD (367 aa).

An N-terminal signal peptide occupies residues 1-24; sequence MMKRFGKTLLALTLAGSVAGMAQA. 36 to 37 serves as a coordination point for putrescine; the sequence is SD. C173 and C236 are oxidised to a cystine. Putrescine-binding residues include D244 and D275.

The protein belongs to the bacterial solute-binding protein PotD/PotF family.

It localises to the periplasm. The protein localises to the secreted. Its function is as follows. Putrescine-binding protein probably required for putrescine uptake into cells. Binds putrescine with high affinity, spermidine with relatively low affinity. Does not bind cadaverine or spermine. Putrescine binding induces large inter-domain conformational changes. In Pseudomonas aeruginosa (strain UCBPP-PA14), this protein is Putrescine-binding periplasmic protein SpuD (spuD).